The following is a 432-amino-acid chain: Glutamate-1-semialdehyde 2,1-aminomutase (432 aa).

The residue at position 272 (Lys-272) is an N6-(pyridoxal phosphate)lysine.

Belongs to the class-III pyridoxal-phosphate-dependent aminotransferase family. HemL subfamily. As to quaternary structure, homodimer. Requires pyridoxal 5'-phosphate as cofactor.

It localises to the cytoplasm. It catalyses the reaction (S)-4-amino-5-oxopentanoate = 5-aminolevulinate. It participates in porphyrin-containing compound metabolism; protoporphyrin-IX biosynthesis; 5-aminolevulinate from L-glutamyl-tRNA(Glu): step 2/2. Its pathway is porphyrin-containing compound metabolism; chlorophyll biosynthesis. This Trichodesmium erythraeum (strain IMS101) protein is Glutamate-1-semialdehyde 2,1-aminomutase.